Reading from the N-terminus, the 268-residue chain is MAQNGSVEQFLDVAVEAAKKAGEIIREGFYKTKHVEHKGMVDLVTETDKACEDFIFNHLKQRFPSHKFIGEETTAACGNFELTDEPTWIVDPLDGTTNFVHGFPFVCVSIGLTIEKKPTVGVVYNPIIDELFTGIDGKGAFLNGKPIKVSSQSELVKALLATEAGTNRDKLVVDATTGRINSLLFKVRSLRMCGSCALNLCGVACGRLDLFYELEFGGPWDVAGGAVIVKEAGGFVFDPSGSEFDLTARRVAATNAHLKDAFIKALNE.

Mg(2+) contacts are provided by E71, D91, L93, and D94. Substrate is bound at residue E71. Substrate is bound by residues 93 to 96, 194 to 196, E213, and D221; these read LDGT and GSC. D221 is a binding site for Mg(2+).

The protein belongs to the inositol monophosphatase superfamily. The cofactor is Mg(2+). As to expression, expressed in the shoot apex, roots, stems, leaves, flowers and young and mature green fruits.

It carries out the reaction a myo-inositol phosphate + H2O = myo-inositol + phosphate. It participates in polyol metabolism; myo-inositol biosynthesis; myo-inositol from D-glucose 6-phosphate: step 2/2. Responsible for the provision of inositol required for synthesis of phosphatidylinositol and polyphosphoinositides. The protein is Inositol monophosphatase 3 (IMP3) of Solanum lycopersicum (Tomato).